We begin with the raw amino-acid sequence, 95 residues long: MKRNSRKTFVGKVVSDKMQKTITVVVDIYKKDPLYGKRVRQSKKFHVHDEEQVAKIGNLVNFMETRPLSKTKKFRLLKVLSHGKESEVRHSGETK.

It belongs to the universal ribosomal protein uS17 family. In terms of assembly, part of the 30S ribosomal subunit.

Functionally, one of the primary rRNA binding proteins, it binds specifically to the 5'-end of 16S ribosomal RNA. This chain is Small ribosomal subunit protein uS17, found in Phytoplasma australiense.